The chain runs to 182 residues: CDP-diacylglycerol--glycerol-3-phosphate 3-phosphatidyltransferase (182 aa).

Topologically, residues glutamine 2–phenylalanine 12 are cytoplasmic. Residues arginine 13 to leucine 37 form a helical membrane-spanning segment. Residues isoleucine 38–threonine 60 are Periplasmic-facing. Residues arginine 61–leucine 81 traverse the membrane as a helical segment. Over valine 82–tyrosine 86 the chain is Cytoplasmic. Residues histidine 87–alanine 107 traverse the membrane as a helical segment. Over leucine 108 to proline 145 the chain is Periplasmic. Residues asparagine 146–methionine 168 form a helical membrane-spanning segment. Over leucine 169–aspartate 181 the chain is Cytoplasmic.

This sequence belongs to the CDP-alcohol phosphatidyltransferase class-I family.

It is found in the cell inner membrane. It carries out the reaction a CDP-1,2-diacyl-sn-glycerol + sn-glycerol 3-phosphate = a 1,2-diacyl-sn-glycero-3-phospho-(1'-sn-glycero-3'-phosphate) + CMP + H(+). It participates in phospholipid metabolism; phosphatidylglycerol biosynthesis; phosphatidylglycerol from CDP-diacylglycerol: step 1/2. In terms of biological role, catalyzes the conversion of cytidine diphosphate diacylglycerol (CDP-DG) and glycerol 3-phosphate into phosphatidylglycerol. Essential for the synthesis of anionic phospholipids, thereby playing a role in balancing the ratio of zwitterionic and anionic phospholipids, which is thought to be important for normal membrane function. The sequence is that of CDP-diacylglycerol--glycerol-3-phosphate 3-phosphatidyltransferase from Salmonella paratyphi A (strain ATCC 9150 / SARB42).